Consider the following 477-residue polypeptide: Putative BTB/POZ domain-containing protein R830 (477 aa).

In terms of domain architecture, BTB spans 13–83 (SDLELILVDK…FYGIETNNDP (71 aa)).

The protein belongs to the mimivirus BTB/WD family.

The polypeptide is Putative BTB/POZ domain-containing protein R830 (Acanthamoeba polyphaga mimivirus (APMV)).